The primary structure comprises 252 residues: Trans-aconitate 2-methyltransferase (252 aa).

This sequence belongs to the methyltransferase superfamily. Tam family.

The protein resides in the cytoplasm. The catalysed reaction is trans-aconitate + S-adenosyl-L-methionine = (E)-3-(methoxycarbonyl)pent-2-enedioate + S-adenosyl-L-homocysteine. In terms of biological role, catalyzes the S-adenosylmethionine monomethyl esterification of trans-aconitate. In Shigella flexneri, this protein is Trans-aconitate 2-methyltransferase.